A 96-amino-acid chain; its full sequence is Large ribosomal subunit protein uL23 (96 aa).

The protein belongs to the universal ribosomal protein uL23 family. Part of the 50S ribosomal subunit. Contacts protein L29, and trigger factor when it is bound to the ribosome.

Functionally, one of the early assembly proteins it binds 23S rRNA. One of the proteins that surrounds the polypeptide exit tunnel on the outside of the ribosome. Forms the main docking site for trigger factor binding to the ribosome. This Aster yellows witches'-broom phytoplasma (strain AYWB) protein is Large ribosomal subunit protein uL23.